A 203-amino-acid chain; its full sequence is Glycerol-3-phosphate acyltransferase (203 aa).

Helical transmembrane passes span 5–25 (IASI…FSLL), 50–70 (TCGF…GALP), 72–92 (IAAQ…TAAM), 115–135 (VVLT…AVTF), 140–160 (ISAV…AVLL), and 162–182 (LGML…AIVF).

The protein belongs to the PlsY family. In terms of assembly, probably interacts with PlsX.

Its subcellular location is the cell membrane. It catalyses the reaction an acyl phosphate + sn-glycerol 3-phosphate = a 1-acyl-sn-glycero-3-phosphate + phosphate. It functions in the pathway lipid metabolism; phospholipid metabolism. In terms of biological role, catalyzes the transfer of an acyl group from acyl-phosphate (acyl-PO(4)) to glycerol-3-phosphate (G3P) to form lysophosphatidic acid (LPA). This enzyme utilizes acyl-phosphate as fatty acyl donor, but not acyl-CoA or acyl-ACP. This Roseiflexus sp. (strain RS-1) protein is Glycerol-3-phosphate acyltransferase.